The following is a 109-amino-acid chain: Ribulose bisphosphate carboxylase small subunit (109 aa).

Belongs to the RuBisCO small chain family. As to quaternary structure, heterohexadecamer of 8 large and 8 small subunits.

It localises to the carboxysome. RuBisCO catalyzes two reactions: the carboxylation of D-ribulose 1,5-bisphosphate, the primary event in carbon dioxide fixation, as well as the oxidative fragmentation of the pentose substrate in the photorespiration process. Both reactions occur simultaneously and in competition at the same active site. Although the small subunit is not catalytic it is essential for maximal activity. The polypeptide is Ribulose bisphosphate carboxylase small subunit (Prochlorothrix hollandica).